The chain runs to 356 residues: ADP-ribosylhydrolase ARH3 (356 aa).

Residues Asp26, Glu33, Thr62, Asp63, and Asp64 each coordinate Mg(2+). Asp63 contributes to the substrate binding site. Residues 132 to 138, His168, and Ile260 contribute to the substrate site; that span reads KGSYGNG. Mg(2+) is bound by residues Asp303, Asp305, and Thr306.

This sequence belongs to the ADP-ribosylglycohydrolase family. In terms of assembly, monomer. Requires Mg(2+) as cofactor. It depends on Mn(2+) as a cofactor.

It is found in the nucleus. The protein resides in the cytoplasm. It localises to the chromosome. The protein localises to the mitochondrion matrix. It catalyses the reaction [(1''-&gt;2')-ADP-alpha-D-ribose](n) + H2O = [(1''-&gt;2')-ADP-alpha-D-ribose](n-1) + ADP-D-ribose. It carries out the reaction 1''-O-acetyl-ADP-alpha-D-ribose + H2O = ADP-D-ribose + acetate + H(+). The catalysed reaction is O-(ADP-D-ribosyl)-L-seryl-[protein] + H2O = ADP-D-ribose + L-seryl-[protein]. The enzyme catalyses alpha-NAD(+) + H2O = ADP-D-ribose + nicotinamide + H(+). Its activity is regulated as follows. The protein undergoes a dramatic conformational switch from closed to open states upon substrate-binding, which enables specific substrate recognition for the 1''-O-linkage. The glutamate flap (Glu-33) blocks substrate entrance to Mg(2+) in the unliganded closed state. In presence of substrate, Glu-33 is ejected from the active site: this closed-to-open transition significantly widens the substrate-binding channel and precisely positions the scissile 1''-O-linkage for cleavage while securing tightly 2'- and 3'-hydroxyls of ADP-ribose. Activity is inhibited by calcium. Functionally, ADP-ribosylhydrolase that preferentially hydrolyzes the scissile alpha-O-linkage attached to the anomeric C1'' position of ADP-ribose and acts on different substrates, such as proteins ADP-ribosylated on serine and threonine, free poly(ADP-ribose) and O-acetyl-ADP-D-ribose. Specifically acts as a serine mono-ADP-ribosylhydrolase by mediating the removal of mono-ADP-ribose attached to serine residues on proteins, thereby playing a key role in DNA damage response. Serine ADP-ribosylation of proteins constitutes the primary form of ADP-ribosylation of proteins in response to DNA damage. Does not hydrolyze ADP-ribosyl-arginine, -cysteine, -diphthamide, or -asparagine bonds. Also able to degrade protein free poly(ADP-ribose), which is synthesized in response to DNA damage: free poly(ADP-ribose) acts as a potent cell death signal and its degradation by ADPRHL2 protects cells from poly(ADP-ribose)-dependent cell death, a process named parthanatos. Also hydrolyzes free poly(ADP-ribose) in mitochondria. Specifically digests O-acetyl-ADP-D-ribose, a product of deacetylation reactions catalyzed by sirtuins. Specifically degrades 1''-O-acetyl-ADP-D-ribose isomer, rather than 2''-O-acetyl-ADP-D-ribose or 3''-O-acetyl-ADP-D-ribose isomers. This is ADP-ribosylhydrolase ARH3 (adprs) from Latimeria chalumnae (Coelacanth).